Here is an 809-residue protein sequence, read N- to C-terminus: MRRALRLLPLPLSIAICLPAMAADKPLNWGLCPAVDPLPGFDGAPAADPKAAEIRQQLPTDIEGDQLSGTSTTPQYQGNVALKRGDQFLGADNLRMDTETGNYIAEGNVRYQDTSFRMVADRAEGNQDTDSHKVTNIQYQLVDRRGNGGAESVDLQGQVGQMHRSTYTTCDPSQPIWRVRAPEIDVDNDEGFGTARNAVLQIGKVPVLYFPWFKFPIDDRRMTGLLFPQFGLSGRNGFDYLQPIYLNLAPNYDATLLPRYMSRRGFMFGTEFRYLYDGGRGEITGNYLPNDNLRKKDRGSVFYSGYHNVNRYWQARSSISWVSDTRYVEDFTSRINGMGSASSIQSTVGIYGTGETWTAGLMADRWQLTDYTLDERSLPYNRQPRAYFTWEKPFGIFEAGVYAEAVRFTHDDSYLVQPPRDGNTNGDDGDDYVRTNIRNQEYGSGSRLDLKPYISMPLSGSAWFLTPTVAWRYTAYQLDSTLANTAPLTGDRSPTRSLPIASLDAGLYFDRETSLFGTKYLNTLEPRAYYLYVPYREQNDLPVFDTRPFTFSYGQLFRDTRYTGADRQNDANQLTLAVTSRWLRQDDGREKLSLSAGQILYFNDSLVTINNSTNAAAGSEQTIEQGKSAWVADANYMINDRWSMGATYQWNPNSRKEDLASLRTRYLLNNDGIINLAYRYRRNLIDESDQLKQADFSFLYPINPTWSAVGRYYYSLLDRKPLEIIGGVQWDSCCLAVRALVRRFVRNRDGEMDNSIQFEFVLKGLSSFGQNTDRTLRRAILGYYRDDLYLVPPSNTTTNPDDYDPNLIP.

An N-terminal signal peptide occupies residues 1–22 (MRRALRLLPLPLSIAICLPAMA).

Belongs to the LptD family. Component of the lipopolysaccharide transport and assembly complex. Interacts with LptE and LptA.

The protein localises to the cell outer membrane. In terms of biological role, together with LptE, is involved in the assembly of lipopolysaccharide (LPS) at the surface of the outer membrane. The chain is LPS-assembly protein LptD from Xanthomonas campestris pv. campestris (strain 8004).